A 472-amino-acid polypeptide reads, in one-letter code: Glycerol-3-phosphate acyltransferase, chloroplastic (472 aa).

The transit peptide at 1 to 102 (MLVLSSSAPP…EIPVKKEDDN (102 aa)) directs the protein to the chloroplast. The short motif at 241 to 246 (HQSEAD) is the HXXXXD motif element.

The protein belongs to the GPAT/DAPAT family.

The protein localises to the plastid. Its subcellular location is the chloroplast stroma. The catalysed reaction is sn-glycerol 3-phosphate + an acyl-CoA = a 1-acyl-sn-glycero-3-phosphate + CoA. Its pathway is phospholipid metabolism; CDP-diacylglycerol biosynthesis; CDP-diacylglycerol from sn-glycerol 3-phosphate: step 1/3. Esterifies acyl-group from acyl-ACP to the sn-1 position of glycerol-3-phosphate. The enzyme from chilling-resistant plants discriminates against non-fluid palmitic acid and selects oleic acid whereas the enzyme from sensitive plants accepts both fatty acids. This is an oleate-selective acyltransferase. The sequence is that of Glycerol-3-phosphate acyltransferase, chloroplastic (GAT) from Spinacia oleracea (Spinach).